Reading from the N-terminus, the 350-residue chain is Arginine N-succinyltransferase (350 aa).

L125 contacts succinyl-CoA. H229 (proton donor) is an active-site residue.

It belongs to the arginine N-succinyltransferase family.

It catalyses the reaction succinyl-CoA + L-arginine = N(2)-succinyl-L-arginine + CoA + H(+). It functions in the pathway amino-acid degradation; L-arginine degradation via AST pathway; L-glutamate and succinate from L-arginine: step 1/5. In terms of biological role, catalyzes the transfer of succinyl-CoA to arginine to produce N(2)-succinylarginine. The polypeptide is Arginine N-succinyltransferase (Yersinia pseudotuberculosis serotype O:3 (strain YPIII)).